The following is a 196-amino-acid chain: Protein GrpE (196 aa).

Residues 1–41 (MSSKEQKTPEGQAPEEIITEQHDDVEAVEPEVSAEQVDPRD) are disordered.

The protein belongs to the GrpE family. In terms of assembly, homodimer.

It is found in the cytoplasm. Participates actively in the response to hyperosmotic and heat shock by preventing the aggregation of stress-denatured proteins, in association with DnaK and GrpE. It is the nucleotide exchange factor for DnaK and may function as a thermosensor. Unfolded proteins bind initially to DnaJ; upon interaction with the DnaJ-bound protein, DnaK hydrolyzes its bound ATP, resulting in the formation of a stable complex. GrpE releases ADP from DnaK; ATP binding to DnaK triggers the release of the substrate protein, thus completing the reaction cycle. Several rounds of ATP-dependent interactions between DnaJ, DnaK and GrpE are required for fully efficient folding. The sequence is that of Protein GrpE from Klebsiella pneumoniae (strain 342).